A 616-amino-acid polypeptide reads, in one-letter code: Endonuclease 8-like 3 (616 aa).

Residues 271-305 form an FPG-type zinc finger; the sequence is KVYKRPNCGQCGTKITVCRLGEHNRMTYFCPKCQK. The segment at 341 to 370 adopts a RanBP2-type zinc-finger fold; the sequence is KEEHWACAVCTLINKPSDKQCDACLTLRPE. Residues 491-524 are disordered; it reads LKTGHTTSNTIHLSSTISSPQSKMTGDAAAKTGN. Residues 494-514 are compositionally biased toward polar residues; that stretch reads GHTTSNTIHLSSTISSPQSKM. Zn(2+) is bound by residues Cys527, His530, Cys553, Cys561, Cys574, His576, Cys599, and Cys607. 2 consecutive GRF-type zinc fingers follow at residues 527–570 and 574–616; these read CSAH…ADLH and CNHG…AKTE.

Belongs to the FPG family.

It localises to the nucleus. Its subcellular location is the chromosome. The catalysed reaction is 2'-deoxyribonucleotide-(2'-deoxyribose 5'-phosphate)-2'-deoxyribonucleotide-DNA = a 3'-end 2'-deoxyribonucleotide-(2,3-dehydro-2,3-deoxyribose 5'-phosphate)-DNA + a 5'-end 5'-phospho-2'-deoxyribonucleoside-DNA + H(+). In terms of biological role, DNA glycosylase which prefers single-stranded DNA (ssDNA), or partially ssDNA structures such as bubble and fork structures, to double-stranded DNA (dsDNA). Mediates interstrand cross-link repair in response to replication stress: recruited to replication stress sites via interaction with ubiquitinated CMG helicase and acts by mediating DNA glycosylase activity. Cleaves one of the two N-glycosyl bonds comprising the interstrand cross-link, which avoids the formation of a double-strand break but generates an abasic site that is bypassed by translesion synthesis polymerases. The sequence is that of Endonuclease 8-like 3 from Xenopus laevis (African clawed frog).